Here is an 89-residue protein sequence, read N- to C-terminus: Otospiralin (89 aa).

An N-terminal signal peptide occupies residues 1–21 (MQACMVPGLALCLLLGPLAGA).

It belongs to the otospiralin family. Ear specific.

It localises to the secreted. In terms of biological role, may be essential for the survival of the neurosensory epithelium of the inner ear. This is Otospiralin (OTOS) from Homo sapiens (Human).